The chain runs to 1168 residues: Transcription-repair-coupling factor (1168 aa).

The region spanning 633–794 is the Helicase ATP-binding domain; that stretch reads DMQKSRPMDR…MLGVRDLSVI (162 aa). 646–653 provides a ligand contact to ATP; the sequence is GDVGYGKT. The DEEQ box signature appears at 747-750; that stretch reads DEEQ. The Helicase C-terminal domain occupies 808 to 969; that stretch reads VLEQNMSFIK…GFKIAMRDLN (162 aa).

This sequence in the N-terminal section; belongs to the UvrB family. The protein in the C-terminal section; belongs to the helicase family. RecG subfamily.

Its subcellular location is the cytoplasm. Its function is as follows. Couples transcription and DNA repair by recognizing RNA polymerase (RNAP) stalled at DNA lesions. Mediates ATP-dependent release of RNAP and its truncated transcript from the DNA, and recruitment of nucleotide excision repair machinery to the damaged site. The protein is Transcription-repair-coupling factor of Staphylococcus aureus (strain MRSA252).